A 436-amino-acid polypeptide reads, in one-letter code: GTPase Der (436 aa).

EngA-type G domains are found at residues proline 4 to threonine 167 and isoleucine 176 to lysine 351. GTP contacts are provided by residues glycine 10–serine 17, aspartate 57–isoleucine 61, asparagine 119–aspartate 122, glycine 182–serine 189, aspartate 229–methionine 233, and asparagine 294–aspartate 297. A KH-like domain is found at lysine 352–asparagine 436.

The protein belongs to the TRAFAC class TrmE-Era-EngA-EngB-Septin-like GTPase superfamily. EngA (Der) GTPase family. Associates with the 50S ribosomal subunit.

Its function is as follows. GTPase that plays an essential role in the late steps of ribosome biogenesis. The polypeptide is GTPase Der (Staphylococcus haemolyticus (strain JCSC1435)).